The sequence spans 366 residues: Peptide chain release factor 2 (366 aa).

An N5-methylglutamine modification is found at glutamine 251.

Belongs to the prokaryotic/mitochondrial release factor family. Post-translationally, methylated by PrmC. Methylation increases the termination efficiency of RF2.

The protein resides in the cytoplasm. Peptide chain release factor 2 directs the termination of translation in response to the peptide chain termination codons UGA and UAA. This chain is Peptide chain release factor 2, found in Campylobacter lari (strain RM2100 / D67 / ATCC BAA-1060).